We begin with the raw amino-acid sequence, 62 residues long: Large ribosomal subunit protein uL30 (62 aa).

It belongs to the universal ribosomal protein uL30 family. In terms of assembly, part of the 50S ribosomal subunit.

The protein is Large ribosomal subunit protein uL30 of Alkalilimnicola ehrlichii (strain ATCC BAA-1101 / DSM 17681 / MLHE-1).